The following is a 414-amino-acid chain: Mini-circle putative transposase for IS117 (414 aa).

This is Mini-circle putative transposase for IS117 from Streptomyces coelicolor (strain ATCC BAA-471 / A3(2) / M145).